A 471-amino-acid polypeptide reads, in one-letter code: Heat shock 70 kDa protein 13 (471 aa).

Residues 1-22 (MAGEMTILGSAVLTLLLAGYLA) form the signal peptide. The segment covering 317–330 (DSKEPQNGDSELPK) has biased composition (basic and acidic residues). Residues 317 to 350 (DSKEPQNGDSELPKDQLTPGDGHHVNRVFRPGLS) form a disordered region.

Belongs to the heat shock protein 70 family. As to quaternary structure, binds UBQLN2.

The protein localises to the microsome. It localises to the endoplasmic reticulum. Has peptide-independent ATPase activity. This is Heat shock 70 kDa protein 13 (Hspa13) from Mus musculus (Mouse).